The chain runs to 351 residues: AT-hook motif nuclear-localized protein 10 (351 aa).

A disordered region spans residues 1 to 151 (MSGSETGLMA…RPPGSSSKRL (151 aa)). Residues 23–37 (HQQQQHSQAQPQQSQ) are compositionally biased toward low complexity. The segment covering 60–77 (SPPQQYQPNSAGENSVLN) has biased composition (polar residues). The short motif at 97-105 (KKRRGRPRK) is the Bipartite nuclear localization signal element. 2 consecutive DNA-binding regions (a.T hook) follow at residues 97 to 109 (KKRR…YGPD) and 138 to 149 (KKRGRPPGSSSK). A PPC domain is found at 159 to 301 (TGIGFTPHVL…QMGLSSPVLP (143 aa)). Polar residues-rich tracts occupy residues 310–325 (MTPS…SESS) and 334–351 (IHQS…MPWK). The disordered stretch occupies residues 310–351 (MTPSSPQSRGTMSESSCGGGHGSPIHQSTGGPYNNTINMPWK).

It localises to the nucleus. Functionally, transcription factor that specifically binds AT-rich DNA sequences related to the nuclear matrix attachment regions (MARs). In Arabidopsis thaliana (Mouse-ear cress), this protein is AT-hook motif nuclear-localized protein 10.